Consider the following 714-residue polypeptide: MASATSSRRQEDVEAGRRKLEQFRKRKAAEKAKKASQNTQPVDNSQQSVIDSDGAGASISNGPLKQSAESTSNETHTKDVYNLSFSNTAMDDGSKERSRQDDGQESVGKVDFSNSLELIGSSKDLTVNTRPEVVPYSNIDKQSSESFDRASTLRETASLFSGTSMQMDGFIHGSGLTSSRKDSLQPTTRMAGSFDEVAKNQQGSGELGGSIVQKPTLSSSYLFNSPDTSSRPSEPSDFSVNITSSSPLNSAKSEATVKRSRPSFLDSLNISRAPETQYQHPEIQADLVTSSGSQLSGSDGFGPSYISGRRDSNGPSSLTSGASDYPNPFEKFRSSLYPAANGVMPGFTDFSMPKQNDDFTALEQHIEDLTQEKFSLQRDLDASRALAESLASENSSMTDTYNQQRGLVNQLKDDMERLYQQIQAQMGELESVRVEYANAQLECNAADERSQILASEVISLEDKALRLRSNELKLERELEKAQTEMLSYKKKLQSLEKDRQDLQSTIKALQEEKKVLQTMVQKASSGGKSTDLSKNSTSRKNVSTSTEGLAISDTTPESSNQETDSTTLLESDSSNTAIIPETRQLTLEGFSLSVPADQMRVIHNINTLIAELAIEKEELVQALSSELSRSAHVQELNKELSRKLEAQTQRLELVTAQKMAIDNVSPEKQQPDTHVVQERTPIADEGDEVVERVLGWIMKMFPGGPSKRRTSKLL.

Disordered regions lie at residues 1-113 (MASA…VDFS), 219-261 (SSYL…KRSR), 288-325 (VTSS…ASDY), and 519-576 (MVQK…SSNT). A compositionally biased stretch (basic and acidic residues) spans 8 to 33 (RRQEDVEAGRRKLEQFRKRKAAEKAK). Polar residues-rich tracts occupy residues 36–50 (SQNT…QSVI) and 58–74 (SISN…TSNE). Positions 92–102 (DGSKERSRQDD) are enriched in basic and acidic residues. Composition is skewed to polar residues over residues 219–253 (SSYL…SAKS), 288–297 (VTSSGSQLSG), 313–322 (NGPSSLTSGA), and 519–561 (MVQK…SSNQ). Residues 356 to 525 (NDDFTALEQH…LQTMVQKASS (170 aa)) adopt a coiled-coil conformation. Residues 562 to 576 (ETDSTTLLESDSSNT) show a composition bias toward low complexity.

As to quaternary structure, interacts with CLF. Expressed in root tips, emerging lateral roots, shoot apical meristem (SAM), vasculature of cotyledons, leaves, sepals and carpels.

It is found in the nucleus. Its subcellular location is the cytoplasm. Its function is as follows. Is required for normal leaf, flower and seed development and controls cotyledon and leaf patterning by inhibiting premature differentiation. Regulates the expression of a subset of PcG target genes. Is required for the repression of the floral specific genes PI, SEP2, and SEP3, but also for the activation of FLC. Involved in response to cold. Involved in the regulation of COR15A, COR15B, BAM3 and AMY3 transcripts, and ascorbate levels in response to prolonged chilling temperatures. This chain is Protein BLISTER, found in Arabidopsis thaliana (Mouse-ear cress).